The chain runs to 1004 residues: Hyaluronate lyase HylB (1004 aa).

A signal peptide spans 1 to 29 (MKNRKIWVMLVGLFTALTNGFMGTTLTFA). Catalysis depends on residues H468, Y477, and R531.

This sequence belongs to the polysaccharide lyase 8 family.

Its subcellular location is the secreted. It carries out the reaction [hyaluronan](n) = n 3-(4-deoxy-beta-D-gluc-4-enuronosyl)-N-acetyl-D-glucosamine + H2O. It catalyses the reaction Eliminative degradation of polysaccharides containing 1,4-beta-D-hexosaminyl and 1,3-beta-D-glucuronosyl linkages to disaccharides containing 4-deoxy-beta-D-gluc-4-enuronosyl groups.. Its function is as follows. Degrades hyaluronic acid (HA) and chondroitin sulfate (CS) A in vitro. Is not active against heparin sodium salt (HS). Involved in the pathogenesis of vancomycin-resistant E.faecalis infections. Contributes to attenuation of the lipopolysaccharide (LPS)-mediated nuclear factor (NF)-kappa-B activation assayed in the mouse RAW-Blue reporter macrophages. In Enterococcus faecalis (strain ATCC 700802 / V583), this protein is Hyaluronate lyase HylB.